The sequence spans 344 residues: Ferredoxin--NADP reductase (344 aa).

FAD-binding residues include D36, Q44, Y49, V89, F127, D291, and T332.

This sequence belongs to the ferredoxin--NADP reductase type 2 family. In terms of assembly, homodimer. The cofactor is FAD.

It carries out the reaction 2 reduced [2Fe-2S]-[ferredoxin] + NADP(+) + H(+) = 2 oxidized [2Fe-2S]-[ferredoxin] + NADPH. The chain is Ferredoxin--NADP reductase from Beijerinckia indica subsp. indica (strain ATCC 9039 / DSM 1715 / NCIMB 8712).